Consider the following 133-residue polypeptide: ATP synthase epsilon chain, chloroplastic (133 aa).

Belongs to the ATPase epsilon chain family. In terms of assembly, F-type ATPases have 2 components, CF(1) - the catalytic core - and CF(0) - the membrane proton channel. CF(1) has five subunits: alpha(3), beta(3), gamma(1), delta(1), epsilon(1). CF(0) has three main subunits: a, b and c.

The protein resides in the plastid. The protein localises to the chloroplast thylakoid membrane. Its function is as follows. Produces ATP from ADP in the presence of a proton gradient across the membrane. This Psilotum nudum (Whisk fern) protein is ATP synthase epsilon chain, chloroplastic.